The following is a 1193-amino-acid chain: MVPAPHTQHSPSSTMLNSSSTTAHAAPSTNGDVHAPKDHHLSSPSDTVSAPVNRKKQKRRQKQAARLAERQLANGHVSTDDTTQNGSSHANPERYHSDDGGADGPDHEQPTNGDVYDKDGQDSMDAHVDSQNPQGPNGTESSQKSTGRKSKKKKGKKARNNSHAQGDETSTPMSTPSVSMSHPLPPPLPSHLASHNILKPAKNRSIWNTSTQEERENIKTFWLELGEEERRQLVKVEKDAVLKKMKEQQRHSCSCTVCGRKRTAIEEELEVLYDAYYEELEQYANHNQGSFEKGSPMVPPPRLYQPPLRSPGQHTRTQGQFHPSRGRIHELTEEDDDLEEDYDEEEDDGDEPYSDEELDEEDEETRAARADFFAFGNSLTVKVADDLLKNDGKHFIDMMEQLAERRMQREEDTQYGIAAAHESLHSGHNHGPFDDEDYDDEEDEDYDSQEEEDYEEDEMDAMTEEQRMEEGRRMFQIFAARMFEQRVLTAYREKVAEQRQQKLIEELMEEETRNEQRNAKKAREAQKRKDKKRLQKQAKEEERARREAEKAAEEAAAKAEQEKKLEEQRKKREEQRKKKEAERKAQEEERARKEAEKLRRQREERERQAEAERKQREEKKRREEARRKEKEERELREKKAKEERDRKAQEEQAKKDTAKGGEEAKDQEKRDDQAKRSSQQGPVPIPSNLHHLQGFSPAVAHSPHVPSATPVLPKAPTPARPRQPSQQDSHSSSPHSQAPSTDPSQASLSPRSMPVSQSSGVASGNSQQGHGLHAMLHQPQPSTPLSPLGRSIPPGFSSVNGIPPNPPGLSGMVARPPVGHDLPSYPPHSGPFISPFRGYPAPSGIPAPPGINGARPMPPGRGFPLEPGQGFAFHGQQIPGAFSTPQGGLPHRHSRQPSGSLERSPLENHAQPMPISRPSPIKRPSSTQQDQQKGGDRTTQRDVDDLSAHLGSSALLDDTDVPLSSTLSQSLPGATAPGTFPGPARASFGGPSLFPDPLSASKHANFAVSPAVSGGTWGAQIPFGTSAFPSAQTWGTGHASGWSNNAFGSGGHHRAHTSRPVAIRLLVIQACKQLNTMSPFKGADGYHDVNLVLRQVEQLRPQNEPSISLKEMLDICDTEGNTQNGGGTFSIKKDETREFVKFEPDNNSAASGHRGSIVPGEIGSPVPSSSLPAFGGIGTPSVLRQYSSPPMGF.

Disordered stretches follow at residues 1 to 197, 288 to 368, 422 to 468, 508 to 815, 857 to 942, 966 to 988, and 1145 to 1193; these read MVPA…SHNI, QGSF…TRAA, ESLH…EQRM, MEEE…MVAR, MPPG…TQRD, TLSQ…RASF, and DNNS…PMGF. Positions 10-29 are enriched in low complexity; it reads SPSSTMLNSSSTTAHAAPST. The span at 53-63 shows a compositional bias: basic residues; that stretch reads NRKKQKRRQKQ. The segment covering 64-73 has biased composition (low complexity); that stretch reads AARLAERQLA. Positions 76–90 are enriched in polar residues; sequence HVSTDDTTQNGSSHA. Over residues 91–128 the composition is skewed to basic and acidic residues; the sequence is NPERYHSDDGGADGPDHEQPTNGDVYDKDGQDSMDAHV. Residues 129-140 show a composition bias toward polar residues; the sequence is DSQNPQGPNGTE. Positions 146-160 are enriched in basic residues; it reads TGRKSKKKKGKKARN. Residues 169 to 182 are compositionally biased toward low complexity; the sequence is TSTPMSTPSVSMSH. The span at 312 to 321 shows a compositional bias: polar residues; the sequence is GQHTRTQGQF. 2 stretches are compositionally biased toward acidic residues: residues 332 to 364 and 434 to 463; these read TEED…EDEE and DDED…DAMT. Residues 448–659 are a coiled coil; it reads SQEEEDYEED…EEQAKKDTAK (212 aa). 2 stretches are compositionally biased toward basic and acidic residues: residues 508 to 527 and 537 to 675; these read MEEE…EAQK and QAKE…DQAK. Residues 722–740 show a composition bias toward low complexity; that stretch reads RQPSQQDSHSSSPHSQAPS. The span at 741–769 shows a compositional bias: polar residues; that stretch reads TDPSQASLSPRSMPVSQSSGVASGNSQQG. The span at 914 to 926 shows a compositional bias: low complexity; sequence PISRPSPIKRPSS. The span at 933 to 942 shows a compositional bias: basic and acidic residues; sequence KGGDRTTQRD. A compositionally biased stretch (low complexity) spans 972-986; sequence PGATAPGTFPGPARA. The segment covering 1182–1193 has biased composition (polar residues); the sequence is VLRQYSSPPMGF.

The protein belongs to the NST1 family.

The protein resides in the cytoplasm. May act as a negative regulator of salt tolerance. This Neosartorya fischeri (strain ATCC 1020 / DSM 3700 / CBS 544.65 / FGSC A1164 / JCM 1740 / NRRL 181 / WB 181) (Aspergillus fischerianus) protein is Stress response protein nst1 (nst1).